The primary structure comprises 462 residues: MGTQALQGFLFLLFLPLLQPRGASAGSLHSPGLSECFQVNGADYRGHQNRTGPRGAGRPCLFWDQTQQHSYSSASDPHGRWGLGAHNFCRNPDGDVQPWCYVAETEEGIYWRYCDIPSCHMPGYLGCFVDSGAPPALSGPSGTSTKLTVQVCLRFCRMKGYQLAGVEAGYACFCGSESDLARGRLAPATDCDQICFGHPGQLCGGDGRLGVYEVSVGSCQGNWTAPQGVIYSPDFPDEYGPDRNCSWALGPPGAALELTFRLFELADPRDRLELRDAASGSLLRAFDGARPPPSGPLRLGTAALLLTFRSDARGHAQGFALTYRGLQDAAEDPEAPEGSAQTPAAPLDGANVSCSPRPGAPPAAIGARVFSTVTAVSVLLLLLLGLLRPLRRRSCLLAPGKGPPALGASRGPRRSWAVWYQQPRGVALPCSPGDPQAEGSAAGYRPLSASSQSSLRSLISAL.

Positions 1–25 (MGTQALQGFLFLLFLPLLQPRGASA) are cleaved as a signal peptide. At 26–364 (GSLHSPGLSE…SPRPGAPPAA (339 aa)) the chain is on the extracellular side. In terms of domain architecture, Kringle spans 35-119 (ECFQVNGADY…YWRYCDIPSC (85 aa)). 3 cysteine pairs are disulfide-bonded: Cys36/Cys119, Cys60/Cys100, and Cys89/Cys114. The N-linked (GlcNAc...) asparagine glycan is linked to Asn49. Residues 121–215 (MPGYLGCFVD…DGRLGVYEVS (95 aa)) enclose the WSC domain. Cys219 and Cys245 form a disulfide bridge. The region spanning 219 to 326 (CQGNWTAPQG…QGFALTYRGL (108 aa)) is the CUB domain. N-linked (GlcNAc...) asparagine glycans are attached at residues Asn222, Asn244, and Asn351. A disordered region spans residues 328–352 (DAAEDPEAPEGSAQTPAAPLDGANV). Residues 365 to 387 (IGARVFSTVTAVSVLLLLLLGLL) traverse the membrane as a helical segment. The Cytoplasmic segment spans residues 388–462 (RPLRRRSCLL…SSLRSLISAL (75 aa)).

Interacts with ERLEC1. Forms a ternary complex with DKK1 and LRP6.

The protein resides in the membrane. Receptor for Dickkopf proteins. Cooperates with DKK1/2 to inhibit Wnt/beta-catenin signaling by promoting the endocytosis of Wnt receptors LRP5 and LRP6. Plays a role in limb development; attenuates Wnt signaling in the developing limb to allow normal limb patterning and can also negatively regulate bone formation. The sequence is that of Kremen protein 2 (KREMEN2) from Homo sapiens (Human).